The chain runs to 104 residues: L-rhamnose mutarotase (104 aa).

Position 18 (Y18) interacts with substrate. Residue H22 is the Proton donor of the active site. Residues Y41 and 76–77 (WW) each bind substrate.

This sequence belongs to the rhamnose mutarotase family. In terms of assembly, homodimer.

It is found in the cytoplasm. The catalysed reaction is alpha-L-rhamnose = beta-L-rhamnose. It functions in the pathway carbohydrate metabolism; L-rhamnose metabolism. Functionally, involved in the anomeric conversion of L-rhamnose. The protein is L-rhamnose mutarotase of Phocaeicola vulgatus (strain ATCC 8482 / DSM 1447 / JCM 5826 / CCUG 4940 / NBRC 14291 / NCTC 11154) (Bacteroides vulgatus).